The sequence spans 244 residues: Tubulin-folding cofactor B (244 aa).

The residue at position 1 (methionine 1) is an N-acetylmethionine. Serine 65 is modified (phosphoserine; by PAK1). At tyrosine 98 the chain carries Phosphotyrosine. Serine 110 carries the post-translational modification Phosphoserine. Residue serine 128 is modified to Phosphoserine; by PAK1. Positions 183 to 225 (GLTDFKPGYWVGVRYDEPLGKNDGSVNGKRYFECQAKYGAFVK) constitute a CAP-Gly domain. The residue at position 219 (lysine 219) is an N6-acetyllysine.

Belongs to the TBCB family. Supercomplex made of cofactors A to E. Cofactors A and D function by capturing and stabilizing tubulin in a quasi-native conformation. Cofactor E binds to the cofactor D-tubulin complex; interaction with cofactor C then causes the release of tubulin polypeptides that are committed to the native state. Cofactors B and E can form a heterodimer which binds to alpha-tubulin and enhances their ability to dissociate tubulin heterodimers. Interacts with GAN. Interacts with DCTN1. Post-translationally, phosphorylation by PAK1 is required for normal function. Ubiquitinated in the presence of GAN which targets it for degradation by the proteasome. As to expression, widely expressed with highest levels in brain. Broadly distributed throughout the neonate brain but restricted mainly to ependymary cells in the adult brain where it is concentrated in the cilia.

The protein resides in the cytoplasm. It is found in the cytoskeleton. In terms of biological role, binds to alpha-tubulin folding intermediates after their interaction with cytosolic chaperonin in the pathway leading from newly synthesized tubulin to properly folded heterodimer. Involved in regulation of tubulin heterodimer dissociation. May function as a negative regulator of axonal growth. The chain is Tubulin-folding cofactor B (Tbcb) from Mus musculus (Mouse).